The primary structure comprises 89 residues: Small ribosomal subunit protein uS14 (89 aa).

This sequence belongs to the universal ribosomal protein uS14 family. In terms of assembly, part of the 30S ribosomal subunit. Contacts proteins S3 and S10.

Functionally, binds 16S rRNA, required for the assembly of 30S particles and may also be responsible for determining the conformation of the 16S rRNA at the A site. This chain is Small ribosomal subunit protein uS14, found in Flavobacterium psychrophilum (strain ATCC 49511 / DSM 21280 / CIP 103535 / JIP02/86).